A 270-amino-acid chain; its full sequence is MRGDVRVHTASPIAAAWLLAVGLVAHAEEPPTVALTVPAAALLPDGALGESIVRGRRYLSDTPAQLPDFVGNGLACRHCHPGRDGEVGTEANAAPFVGVVGRFPQYSARHGRLITLEQRIGDCFERSLNGRALALDHPALIDMLAYMSWLSQGVPVGAVVAGHGIPTLTLEREPDGVHGEALYQARCLACHGADGSGTLDADGRYLFPPLWGPRSFNTGAGMNRQATAAGFIKHKMPLGADDSLSDEEAWDVAGFVLTHPRPLFQEPTGD.

A signal peptide spans 1 to 27 (MRGDVRVHTASPIAAAWLLAVGLVAHA). Cytochrome c domains follow at residues 44 to 158 (PDGA…PVGA) and 174 to 260 (PDGV…LTHP). Positions 76, 79, 80, 187, 190, and 191 each coordinate heme c.

In terms of assembly, monomer. Binds 2 heme c groups covalently per subunit.

The protein localises to the periplasm. The catalysed reaction is 2 thiosulfate + 2 Fe(III)-[cytochrome c] = tetrathionate + 2 Fe(II)-[cytochrome c] + 2 H(+). In terms of biological role, catalyzes the oxidation of 2 molecules of thiosulfate to tetrathionate. The sequence is that of Thiosulfate dehydrogenase (tsdA) from Allochromatium vinosum (strain ATCC 17899 / DSM 180 / NBRC 103801 / NCIMB 10441 / D) (Chromatium vinosum).